The following is a 338-amino-acid chain: Anthranilate phosphoribosyltransferase (338 aa).

Residues Gly81, 84 to 85 (GD), Thr89, 91 to 94 (NIST), 109 to 117 (KHGNRAVSS), and Ser121 each bind 5-phospho-alpha-D-ribose 1-diphosphate. Gly81 is an anthranilate binding site. Ser93 lines the Mg(2+) pocket. Asn112 serves as a coordination point for anthranilate. Arg167 is an anthranilate binding site. 2 residues coordinate Mg(2+): Asp226 and Glu227.

It belongs to the anthranilate phosphoribosyltransferase family. As to quaternary structure, homodimer. The cofactor is Mg(2+).

It catalyses the reaction N-(5-phospho-beta-D-ribosyl)anthranilate + diphosphate = 5-phospho-alpha-D-ribose 1-diphosphate + anthranilate. It functions in the pathway amino-acid biosynthesis; L-tryptophan biosynthesis; L-tryptophan from chorismate: step 2/5. Functionally, catalyzes the transfer of the phosphoribosyl group of 5-phosphorylribose-1-pyrophosphate (PRPP) to anthranilate to yield N-(5'-phosphoribosyl)-anthranilate (PRA). The polypeptide is Anthranilate phosphoribosyltransferase (Myxococcus xanthus (strain DK1622)).